The sequence spans 202 residues: Large ribosomal subunit protein bL25 (202 aa).

This sequence belongs to the bacterial ribosomal protein bL25 family. CTC subfamily. As to quaternary structure, part of the 50S ribosomal subunit; part of the 5S rRNA/L5/L18/L25 subcomplex. Contacts the 5S rRNA. Binds to the 5S rRNA independently of L5 and L18.

This is one of the proteins that binds to the 5S RNA in the ribosome where it forms part of the central protuberance. This Corynebacterium efficiens (strain DSM 44549 / YS-314 / AJ 12310 / JCM 11189 / NBRC 100395) protein is Large ribosomal subunit protein bL25.